The primary structure comprises 306 residues: 26S proteasome non-ATPase regulatory subunit 14 (306 aa).

Residues 31–166 (IHISSLALLK…IDAFRTIKTS (136 aa)) form the MPN domain. Residues histidine 113, histidine 115, and aspartate 126 each contribute to the Zn(2+) site. A JAMM motif motif is present at residues 113–126 (HSHPGFGCWLSSVD).

The protein belongs to the peptidase M67A family. PSMD14 subfamily. In terms of assembly, component of the 19S regulatory cap of the 26S proteasome.

Functionally, metalloprotease component of the 26S proteasome that specifically cleaves 'Lys-63'-linked polyubiquitin chains. The 26S proteasome is involved in the ATP-dependent degradation of ubiquitinated proteins. The function of the 'Lys-63'-specific deubiquitination of the proteasome is unclear. The polypeptide is 26S proteasome non-ATPase regulatory subunit 14 (psmD14) (Dictyostelium discoideum (Social amoeba)).